The sequence spans 303 residues: Putative S-adenosyl-L-methionine-dependent methyltransferase MAP_4197c (303 aa).

S-adenosyl-L-methionine-binding positions include aspartate 129 and 158–159 (DL).

This sequence belongs to the UPF0677 family.

In terms of biological role, exhibits S-adenosyl-L-methionine-dependent methyltransferase activity. This chain is Putative S-adenosyl-L-methionine-dependent methyltransferase MAP_4197c, found in Mycolicibacterium paratuberculosis (strain ATCC BAA-968 / K-10) (Mycobacterium paratuberculosis).